A 225-amino-acid polypeptide reads, in one-letter code: Histone H3-like centromeric protein cid (225 aa).

Residues 1–11 (MPRHSRAKRAP) are compositionally biased toward basic residues. Residues 1 to 131 (MPRHSRAKRA…KAANPMSRAK (131 aa)) form a disordered region. Polar residues predominate over residues 43–52 (FTTSQLTLQD). Residues Ser-74 and Ser-75 each carry the phosphoserine modification. A Phosphothreonine modification is found at Thr-76. Residue Ser-77 is modified to Phosphoserine. Positions 86–103 (RYPTTRSPQTRRMTVQQE) are enriched in polar residues. The segment at 133-225 (MDREIRRLQH…AYICDRGRQF (93 aa)) is H3-like.

It belongs to the histone H3 family. In terms of assembly, forms a nucleosome-like histone octamer containing two molecules each of H2A, H2B, cid and H4 assembled in one cid-H4 heterotetramer and two H2A-H2B heterodimers. The cid-H4 heterotetramer is more compact and structurally more rigid than corresponding H3-H4 heterotetramers. Interacts with the condensin subunit Cap-G. Interacts with Chrac-14.

It localises to the nucleus. The protein resides in the chromosome. It is found in the centromere. The protein localises to the kinetochore. In terms of biological role, histone H3-like variant which exclusively replaces conventional H3 in the nucleosome core of centromeric chromatin at the inner plate of the kinetochore. Required for recruitment and assembly of kinetochore proteins, mitotic progression and chromosome segregation. May serve as an epigenetic mark that propagates centromere identity through replication and cell division. This chain is Histone H3-like centromeric protein cid, found in Drosophila melanogaster (Fruit fly).